The sequence spans 195 residues: MNINPNNIDLIISAVQEAQYPDTGLSEVALSGRSNVGKSSFINSMIGRKNMARTSQQPGKTQTLNFFNIDDQLIFVDVPGYGYAKVSKSQREKFGKMIEEYLTKRESLKLVIQLVDLRHNPTEDDVLMYNYLKHFDIPTLVICTKEDKIAKGKIQKHIKNIKEKLDLDPDDTIISYSSIQNTKQQQIWDLIANYL.

In terms of domain architecture, EngB-type G spans 24-195 (GLSEVALSGR…QIWDLIANYL (172 aa)). GTP-binding positions include 32–39 (GRSNVGKS), 59–63 (GKTQT), 77–80 (DVPG), 144–147 (TKED), and 176–178 (YSS). Mg(2+)-binding residues include Ser39 and Thr61.

The protein belongs to the TRAFAC class TrmE-Era-EngA-EngB-Septin-like GTPase superfamily. EngB GTPase family. The cofactor is Mg(2+).

Necessary for normal cell division and for the maintenance of normal septation. The protein is Probable GTP-binding protein EngB of Staphylococcus haemolyticus (strain JCSC1435).